Consider the following 396-residue polypeptide: S-adenosylmethionine synthase (396 aa).

Histidine 15 provides a ligand contact to ATP. A Mg(2+)-binding site is contributed by aspartate 17. Glutamate 43 is a binding site for K(+). The L-methionine site is built by glutamate 56 and glutamine 99. Positions 99 to 109 (QSSDIAQGVDR) are flexible loop. Residues 175–177 (DGK), 241–242 (RF), aspartate 250, 256–257 (RK), serine 273, and lysine 277 each bind ATP. L-methionine is bound at residue aspartate 250. Position 281 (lysine 281) interacts with L-methionine.

Belongs to the AdoMet synthase family. As to quaternary structure, homotetramer; dimer of dimers. Requires Mg(2+) as cofactor. It depends on K(+) as a cofactor.

The protein localises to the cytoplasm. It catalyses the reaction L-methionine + ATP + H2O = S-adenosyl-L-methionine + phosphate + diphosphate. It participates in amino-acid biosynthesis; S-adenosyl-L-methionine biosynthesis; S-adenosyl-L-methionine from L-methionine: step 1/1. In terms of biological role, catalyzes the formation of S-adenosylmethionine (AdoMet) from methionine and ATP. The overall synthetic reaction is composed of two sequential steps, AdoMet formation and the subsequent tripolyphosphate hydrolysis which occurs prior to release of AdoMet from the enzyme. This Pelotomaculum thermopropionicum (strain DSM 13744 / JCM 10971 / SI) protein is S-adenosylmethionine synthase.